A 589-amino-acid polypeptide reads, in one-letter code: Aspartate--tRNA ligase (589 aa).

An L-aspartate-binding site is contributed by glutamate 176. Positions 200-203 (QLFK) are aspartate. Residue arginine 222 participates in L-aspartate binding. Residues 222–224 (RDE) and glutamine 231 each bind ATP. Histidine 449 provides a ligand contact to L-aspartate. An ATP-binding site is contributed by glutamate 483. Arginine 490 serves as a coordination point for L-aspartate. Position 535 to 538 (535 to 538 (GLDR)) interacts with ATP.

This sequence belongs to the class-II aminoacyl-tRNA synthetase family. Type 1 subfamily. Homodimer.

The protein resides in the cytoplasm. It carries out the reaction tRNA(Asp) + L-aspartate + ATP = L-aspartyl-tRNA(Asp) + AMP + diphosphate. Its function is as follows. Catalyzes the attachment of L-aspartate to tRNA(Asp) in a two-step reaction: L-aspartate is first activated by ATP to form Asp-AMP and then transferred to the acceptor end of tRNA(Asp). The protein is Aspartate--tRNA ligase of Enterococcus faecalis (strain ATCC 700802 / V583).